We begin with the raw amino-acid sequence, 1806 residues long: Focadhesin (1806 aa).

A disordered region spans residues 733–760 (ARPIPKQPEVEDEVKQNEEENEEEEDIS).

The protein localises to the cell junction. It localises to the focal adhesion. Its subcellular location is the cytoplasm. It is found in the cytosol. Functionally, required for the maintenance of SKIC2 and SKIC3 proteostatic levels in the liver. May be involved in the regulation of RNA degradation by the exosome complex. This Danio rerio (Zebrafish) protein is Focadhesin (focad).